A 221-amino-acid polypeptide reads, in one-letter code: Max dimerization protein 1 (221 aa).

The Nuclear localization signal signature appears at 21 to 49 (RREREAEHGYASMLPYNNKDRDALKRRNK). 2 disordered regions span residues 30–68 (YASM…EKNR) and 173–204 (TGDL…YSST). A bHLH domain is found at 56 to 108 (SSRSTHNEMEKNRRAHLRLCLEKLKGLVPLGPESSRHTTLSLLTKAKLHIKKL). Positions 175–184 (DLDWSSSSVS) are enriched in low complexity. The span at 191-204 (SMQSLGSDEGYSST) shows a compositional bias: polar residues.

As to quaternary structure, heterodimer with MAX; the interaction is required for DNA-binding. DNA binding requires dimerization with another bHLH protein; does not form homodimers, and does not bind to DNA in the absence of MAX in vitro. Interacts with RNF17. Ubiquitinated by BIRC2/c-IAP1, leading to its subsequent degradation by the proteasome.

The protein localises to the nucleus. In terms of biological role, component of a transcriptional repressor complex together with MAX. In complex with MAX binds to the core DNA sequence 5'-CAC[GA]TG-3'. Antagonizes MYC transcriptional activity by competing with MYC for MAX binding. Binds to the TERT promoter and represses telomerase expression, possibly by interfering with MYC binding. The protein is Max dimerization protein 1 (MXD1) of Homo sapiens (Human).